Here is a 313-residue protein sequence, read N- to C-terminus: Ribose-phosphate pyrophosphokinase (313 aa).

ATP is bound by residues 37-39 (DGE) and 96-97 (RQ). His131 and Asp170 together coordinate Mg(2+). The active site involves Lys193. D-ribose 5-phosphate-binding positions include Arg195, Asp219, and 223–227 (DTAGT).

It belongs to the ribose-phosphate pyrophosphokinase family. Class I subfamily. In terms of assembly, homohexamer. Mg(2+) serves as cofactor.

It localises to the cytoplasm. The enzyme catalyses D-ribose 5-phosphate + ATP = 5-phospho-alpha-D-ribose 1-diphosphate + AMP + H(+). The protein operates within metabolic intermediate biosynthesis; 5-phospho-alpha-D-ribose 1-diphosphate biosynthesis; 5-phospho-alpha-D-ribose 1-diphosphate from D-ribose 5-phosphate (route I): step 1/1. Its function is as follows. Involved in the biosynthesis of the central metabolite phospho-alpha-D-ribosyl-1-pyrophosphate (PRPP) via the transfer of pyrophosphoryl group from ATP to 1-hydroxyl of ribose-5-phosphate (Rib-5-P). The sequence is that of Ribose-phosphate pyrophosphokinase from Pseudomonas aeruginosa (strain ATCC 15692 / DSM 22644 / CIP 104116 / JCM 14847 / LMG 12228 / 1C / PRS 101 / PAO1).